The primary structure comprises 274 residues: Type II restriction enzyme HgiBI (274 aa).

It belongs to the TdeIII type II restriction endonuclease family.

It catalyses the reaction Endonucleolytic cleavage of DNA to give specific double-stranded fragments with terminal 5'-phosphates.. Its function is as follows. A P subtype restriction enzyme that recognizes the double-stranded sequence 5'-GGWCC-3' and cleaves after G-1. This system is less active than isoschizomeric RM.HgiEI. The polypeptide is Type II restriction enzyme HgiBI (Herpetosiphon aurantiacus (Herpetosiphon giganteus)).